A 533-amino-acid polypeptide reads, in one-letter code: 2,3-bisphosphoglycerate-independent phosphoglycerate mutase (533 aa).

2 residues coordinate Mn(2+): Asp-15 and Ser-65. Ser-65 functions as the Phosphoserine intermediate in the catalytic mechanism. Substrate contacts are provided by residues His-126, 156–157, Arg-188, Arg-194, 258–261, and Lys-331; these read RD and RPDR. Mn(2+) contacts are provided by Asp-398, His-402, Asp-439, His-440, and His-457.

The protein belongs to the BPG-independent phosphoglycerate mutase family. Monomer. Mn(2+) is required as a cofactor.

The enzyme catalyses (2R)-2-phosphoglycerate = (2R)-3-phosphoglycerate. It participates in carbohydrate degradation; glycolysis; pyruvate from D-glyceraldehyde 3-phosphate: step 3/5. Functionally, catalyzes the interconversion of 2-phosphoglycerate and 3-phosphoglycerate. This chain is 2,3-bisphosphoglycerate-independent phosphoglycerate mutase, found in Trichormus variabilis (strain ATCC 29413 / PCC 7937) (Anabaena variabilis).